Consider the following 169-residue polypeptide: MRTLKIEPLTKEAFAPFGDVIETEGSDYFMINNGSTRRYHKLATVETAQPEDNAIISIFSAEKLEMPLRIRMLERHPLGSQAFIPLLGNPFLVVVAPLGDVPVPGLVRAFLTNGRQGVNYHRGVWHHPVLTIEKRDDFLVVDRSGSGNNCDEHFFTEDEQLLLDPQSNQ.

It belongs to the ureidoglycolate lyase family. In terms of assembly, homodimer. The cofactor is Ni(2+).

It carries out the reaction (S)-ureidoglycolate = urea + glyoxylate. Its pathway is nitrogen metabolism; (S)-allantoin degradation. Its function is as follows. Catalyzes the catabolism of the allantoin degradation intermediate (S)-ureidoglycolate, generating urea and glyoxylate. Involved in the utilization of allantoin as nitrogen source. This is Ureidoglycolate lyase from Pseudomonas paraeruginosa (strain DSM 24068 / PA7) (Pseudomonas aeruginosa (strain PA7)).